We begin with the raw amino-acid sequence, 435 residues long: Probable xyloglucan galactosyltransferase GT19 (435 aa).

Residues 1-6 (MASKST) are Cytoplasmic-facing. The helical; Signal-anchor for type II membrane protein transmembrane segment at 7–23 (VTTLTIFFFFFFFFIEP) threads the bilayer. Over 24-435 (KVQSQQISAV…GVLDRIISRV (412 aa)) the chain is Lumenal. Residues asparagine 140, asparagine 203, and asparagine 277 are each glycosylated (N-linked (GlcNAc...) asparagine).

It belongs to the glycosyltransferase 47 family. In terms of tissue distribution, expressed in roots, hypocotyls, cotyledons, leaves, stems, stamens and pollen grains.

It is found in the golgi apparatus membrane. Functions in xyloglucan synthesis by adding side chains to the xylosylated glucan backbone. Involved in the galactosylation of hemicellulose xyloglucan. This is Probable xyloglucan galactosyltransferase GT19 from Arabidopsis thaliana (Mouse-ear cress).